The following is a 522-amino-acid chain: Putative cysteine ligase BshC (522 aa).

The stretch at 436-469 (SWAQAEKAKALKQLEDIEKKLRKAEERKHDDVIK) forms a coiled coil.

This sequence belongs to the BshC family.

The sequence is that of Putative cysteine ligase BshC from Cytophaga hutchinsonii (strain ATCC 33406 / DSM 1761 / CIP 103989 / NBRC 15051 / NCIMB 9469 / D465).